A 119-amino-acid polypeptide reads, in one-letter code: Circadian clock oscillator protein KaiB (119 aa).

The protein belongs to the KaiB family. As to quaternary structure, the KaiABC complex composition changes during the circadian cycle to control KaiC phosphorylation. Complexes KaiC(6), KaiA(2-4):KaiC(6), KaiB(6):KaiC(6) and KaiC(6):KaiB(6):KaiA(12) are among the most important forms, many form cooperatively. Undergoes a major conformational rearrangment; in the free state forms homotetramers as a dimer of dimers. When bound to the CI domain of KaiC switches to a monomeric thioredoxin-fold (KaiB(fs)). KaiB(fs) binds CikA, leading it to dephosphorylate phospho-RpaA.

In terms of biological role, key component of the KaiABC oscillator complex, which constitutes the main circadian regulator in cyanobacteria. Complex composition changes during the circadian cycle to control KaiC phosphorylation. KaiA stimulates KaiC autophosphorylation, while KaiB sequesters KaiA, leading to KaiC autodephosphorylation. Phospho-Ser-431 KaiC accumulation triggers binding of KaiB to form the KaiB(6):KaiC(6) complex, leading to changes in output regulators CikA and SasA. KaiB switches to a thioredoxin-like fold (KaiB(fs)) when bound to KaiC. KaiB(6):KaiC(6) formation exposes a site for KaiA binding that sequesters KaiA from KaiC, making the KaiC(6):KaiB(6):KaiA(12) complex that results in KaiC autodephosphorylation. Functionally, a metamorphic protein which reversibly switches between an inactive tetrameric fold and a rare, thioredoxin-like monomeric fold (KaiB(fs)). KaiB(fs) binds phospho-KaiC, KaiA and CikA. KaiA and CikA compete for binding to KaiB(fs), and KaiB(fs) and SasA compete for binding to KaiC, thus the clock oscillator and output signal pathway are tightly coupled. The protein is Circadian clock oscillator protein KaiB of Synechococcus sp. (strain CC9311).